Consider the following 126-residue polypeptide: MASASTQPAALSAEQAKVVLAEVIQAFSAPENAVRMDEARDNACNDMGKMLQFVLPVATQIQQEVIKAYGFSCDGEGVLKFARLVKSYEAQDPEIASLSGKLKALFLPPMTLPPHGPAAGGSVAAS.

At Ala-2 the chain carries N-acetylalanine.

Belongs to the UPF0456 family. As to expression, ubiquitously expressed, with higher expression in lung and fetal brain.

The protein localises to the cytoplasm. In terms of biological role, in brain, may be required for corpus callosum development. The polypeptide is Protein C10 (C12orf57) (Homo sapiens (Human)).